Consider the following 686-residue polypeptide: Bromodomain-containing factor 1 (686 aa).

Disordered regions lie at residues 1–69 (MTDI…PAGL) and 85–150 (NGYN…NPIP). The span at 9–25 (NDVDVNGNNVNDDVSSN) shows a compositional bias: low complexity. Over residues 99 to 120 (QGLKKEEGGQGTKQEDLDENSK) the composition is skewed to basic and acidic residues. A compositionally biased stretch (pro residues) spans 130–139 (EPAPAPPPEP). Residues 145–254 (PQNPIPKHQQ…ASFEKHMLNM (110 aa)) form the Bromo 1 domain. Ser-270 is modified (phosphoserine). The disordered stretch occupies residues 283-304 (QTHNGRPKRTIHPPKSKDIYPY). Residues 287 to 296 (GRPKRTIHPP) are compositionally biased toward basic residues. In terms of domain architecture, Bromo 2 spans 312–421 (KRLQQAMKFC…EVFNSKWADR (110 aa)). 4 disordered regions span residues 424–447 (LDDY…SEYS), 486–523 (IRKE…KKNK), 594–636 (SSGA…EQSR), and 649–686 (DSAS…SEEE). Ser-429 is subject to Phosphoserine. Acidic residues predominate over residues 438–447 (DYDDYESEYS). Positions 460–499 (AIQYLEEQLARMKVELQQLKKQELEKIRKERRLARGSKKR) form a coiled coil. The segment covering 488–507 (KERRLARGSKKRGKRSKGRS) has biased composition (basic residues). Residues 518–598 (RDKKNKLKTV…RQYESSSGAS (81 aa)) form the NET domain. Composition is skewed to polar residues over residues 594–620 (SSGA…TSAG) and 652–671 (SPLS…HNGF). Residues Ser-615 and Ser-659 each carry the phosphoserine modification. The span at 675-686 (SDDDVSSESEEE) shows a compositional bias: acidic residues.

The protein belongs to the BET family. Interacts with the TFIID subunit TAF7 and with acetylated histones H3 and H4. In terms of processing, phosphorylated by the casein kinase CK2 complex.

The protein localises to the nucleus. Its function is as follows. Transcription factor involved in the expression of a broad class of genes including snRNAs. Required for sporulation and DNA-damage repair. Prevents the spreading of SIR silencing at telomeres and protects histone H4, but not H3, from deacetylation. The sequence is that of Bromodomain-containing factor 1 (BDF1) from Saccharomyces cerevisiae (strain ATCC 204508 / S288c) (Baker's yeast).